The primary structure comprises 356 residues: Carbohydrate sulfotransferase 10 (356 aa).

The Cytoplasmic segment spans residues M1–L6. Residues L7 to L27 traverse the membrane as a helical; Signal-anchor for type II membrane protein segment. Topologically, residues T28 to N356 are lumenal. N99 carries an N-linked (GlcNAc...) asparagine glycan. 3'-phosphoadenylyl sulfate contacts are provided by residues P127–Q133 and R189–S197. N-linked (GlcNAc...) asparagine glycans are attached at residues N228 and N316.

Belongs to the sulfotransferase 2 family. In myogenic progenitors, it is ubiquitously expressed.

It is found in the golgi apparatus membrane. The enzyme catalyses 3-O-{beta-D-GlcA-(1-&gt;[3)-alpha-D-Xyl-(1-&gt;3)-beta-D-GlcA-(1-&gt;](n)-4)-beta-D-Xyl-(1-&gt;4)-Rib-ol-P-Rib-ol-P-3-beta-D-GalNAc-(1-&gt;3)-beta-D-GlcNAc-(1-&gt;4)-O-6-P-alpha-D-Man}-L-Thr-[protein] + 3'-phosphoadenylyl sulfate = 3-O-{O-3-S-beta-D-GlcA-(1-&gt;[3)-alpha-D-Xyl-(1-&gt;3)-beta-D-GlcA-(1-&gt;](n)-4)-beta-D-Xyl-(1-&gt;4)-Rib-ol-P-Rib-ol-P-3-beta-D-GalNAc-(1-&gt;3)-beta-D-GlcNAc-(1-&gt;4)-O-6-P-alpha-D-Man}-L-Thr-[protein] + adenosine 3',5'-bisphosphate + H(+). It carries out the reaction 17beta-estradiol 3-O-(beta-D-glucuronate) + 3'-phosphoadenylyl sulfate = 17beta-estradiol 3-O-(3-sulfo-beta-D-glucuronate) + adenosine 3',5'-bisphosphate + H(+). The catalysed reaction is 17beta-estradiol 3-O-(beta-D-glucuronate) 17-sulfate + 3'-phosphoadenylyl sulfate = 17beta-estradiol 3-O-(3-sulfo-beta-D-glucuronate) 17-sulfate + adenosine 3',5'-bisphosphate + H(+). It catalyses the reaction 17beta-estradiol 17-O-(beta-D-glucuronate) + 3'-phosphoadenylyl sulfate = 17beta-estradiol 17-O-(3-sulfo-beta-D-glucuronate) + adenosine 3',5'-bisphosphate + H(+). The enzyme catalyses 16alpha,17beta-estriol 3-O-(beta-D-glucuronate) + 3'-phosphoadenylyl sulfate = 16alpha,17beta-estriol 3-O-(3-sulfo-beta-D-glucuronate) + adenosine 3',5'-bisphosphate + H(+). It carries out the reaction 16alpha,17beta-estriol 16-O-(beta-D-glucuronate) + 3'-phosphoadenylyl sulfate = 16alpha,17beta-estriol 16-O-(3-sulfo-beta-D-glucuronate) + adenosine 3',5'-bisphosphate + H(+). The catalysed reaction is 16alpha,17beta-estriol 17-O-(beta-D-glucuronate) + 3'-phosphoadenylyl sulfate = 16alpha,17beta-estriol 17-O-(3-sulfo-beta-D-glucuronate) + adenosine 3',5'-bisphosphate + H(+). It catalyses the reaction estrone 3-O-(beta-D-glucuronate) + 3'-phosphoadenylyl sulfate = estrone 3-O-(3-sulfo-beta-D-glucuronate) + adenosine 3',5'-bisphosphate + H(+). The enzyme catalyses 3alpha,20alpha-dihydroxy-5beta-pregnane 3-O-(beta-D-glucuronate) + 3'-phosphoadenylyl sulfate = 3alpha,20alpha-dihydroxy-5beta-pregnane 3-O-(3-sulfo-beta-D-glucuronate) + adenosine 3',5'-bisphosphate + H(+). It carries out the reaction testosterone 17-O-(beta-D-glucuronate) + 3'-phosphoadenylyl sulfate = testosterone 17-O-(3-sulfo-beta-D-glucuronate) + adenosine 3',5'-bisphosphate + H(+). The catalysed reaction is 3beta-androst-5-en-17-one 3-O-(beta-D-glucuronate) + 3'-phosphoadenylyl sulfate = 3beta-androst-5-en-17-one 3-O-(3-sulfo-beta-D-glucuronate) + adenosine 3',5'-bisphosphate + H(+). It catalyses the reaction 3alpha,17alpha-dihydroxy-5beta-androstane-11-one-17beta-carboxylate 3-O-(beta-D-glucuronate) + 3'-phosphoadenylyl sulfate = 3alpha,17alpha-dihydroxy-5beta-androstane-11-one-17beta-carboxylate 3-O-(3-sulfo-beta-D-glucuronate) + adenosine 3',5'-bisphosphate + H(+). The enzyme catalyses 3alpha-hydroxyetiocholan-17-one 3-O-(beta-D-glucuronate) + 3'-phosphoadenylyl sulfate = 3alpha-hydroxyetiocholan-17-one 3-O-(3-sulfo-beta-D-glucuronate) + adenosine 3',5'-bisphosphate + H(+). The protein operates within steroid metabolism. It participates in protein modification; carbohydrate sulfation. Functionally, catalyzes the transfer of sulfate from 3'-phosphoadenylyl sulfate (PAPS) to position 3 of terminal glucuronic acid of both protein- and lipid-linked oligosaccharides. Participates in biosynthesis of HNK-1 carbohydrate structure 3-O-sulfo-beta-D-GlcA-(1-&gt;3)-beta-D-Gal-(1-&gt;4)-D-GlcNAc-R, a sulfated glucuronyl-lactosaminyl residue carried by many neural recognition molecules, which is involved in cell interactions during ontogenetic development and in synaptic plasticity in the adult. May be indirectly involved in synapse plasticity of the hippocampus, via its role in HNK-1 biosynthesis. Sulfates terminal glucuronyl residue of the laminin globular (LG)-domain binding epitope on DAG1/alpha-dystroglycan and prevents further polymerization by LARGE1 glycosyltransferase. Likely defines the chain length of LG epitope, conferring binding specificity to extracellular matrix components. Plays a role in down-regulating the steroid hormones. Sulfates glucuronidated estrogens and androgens with an impact in hormone cycle and fertility. Has a preference for glucuronyl moiety at the 3-hydroxyl group of a sterol ring rather than the 17-hydroxyl group, showing high catalytic efficiency for 17beta-estradiol 3-O-(beta-D-glucuronate) and dehydroepiandrosterone 3-O-(beta-D-glucuronate) hormones. The protein is Carbohydrate sulfotransferase 10 (Chst10) of Rattus norvegicus (Rat).